The primary structure comprises 351 residues: Hydroxymethylglutaryl-CoA synthase (351 aa).

Catalysis depends on E80, which acts as the Proton donor/acceptor. The active-site Acyl-thioester intermediate is the C112. Residues C112 and S153 each coordinate (3S)-3-hydroxy-3-methylglutaryl-CoA. R199 is a binding site for CoA. The (3S)-3-hydroxy-3-methylglutaryl-CoA site is built by T201 and H234. The Proton donor/acceptor role is filled by H234. CoA is bound at residue K239. (3S)-3-hydroxy-3-methylglutaryl-CoA-binding residues include R243, N266, and S296.

It belongs to the thiolase-like superfamily. Archaeal HMG-CoA synthase family. In terms of assembly, interacts with acetoacetyl-CoA thiolase that catalyzes the precedent step in the pathway and with a DUF35 protein. The acetoacetyl-CoA thiolase/HMG-CoA synthase complex channels the intermediate via a fused CoA-binding site, which allows for efficient coupling of the endergonic thiolase reaction with the exergonic HMGCS reaction.

The catalysed reaction is acetoacetyl-CoA + acetyl-CoA + H2O = (3S)-3-hydroxy-3-methylglutaryl-CoA + CoA + H(+). It participates in metabolic intermediate biosynthesis; (R)-mevalonate biosynthesis; (R)-mevalonate from acetyl-CoA: step 2/3. Its function is as follows. Catalyzes the condensation of acetyl-CoA with acetoacetyl-CoA to form 3-hydroxy-3-methylglutaryl-CoA (HMG-CoA). Functions in the mevalonate (MVA) pathway leading to isopentenyl diphosphate (IPP), a key precursor for the biosynthesis of isoprenoid compounds that are building blocks of archaeal membrane lipids. This Thermoplasma volcanium (strain ATCC 51530 / DSM 4299 / JCM 9571 / NBRC 15438 / GSS1) protein is Hydroxymethylglutaryl-CoA synthase.